A 665-amino-acid chain; its full sequence is Succinate dehydrogenase [ubiquinone] flavoprotein subunit B, mitochondrial (665 aa).

The N-terminal 45 residues, 1 to 45 (MALLKVAPSRLLSRALQLTSTLQNCTATSIAARRNFHFTVYGRKD), are a transit peptide targeting the mitochondrion. Residues Ala-72, Ala-75, Thr-94, Lys-95, and Ser-101 each coordinate FAD. A Tele-8alpha-FAD histidine modification is found at His-102. Positions 103, 108, 224, and 278 each coordinate FAD. Oxaloacetate contacts are provided by His-299, Arg-343, and His-410. Arg-343 serves as the catalytic Proton acceptor. Glu-443 contacts FAD. Residues Arg-454 and Ala-457 each coordinate oxaloacetate. Residues Ser-459 and Leu-460 each contribute to the FAD site.

This sequence belongs to the FAD-dependent oxidoreductase 2 family. FRD/SDH subfamily. As to quaternary structure, component of complex II composed of four subunits: a flavoprotein (FP), an iron-sulfur protein (IP), and a cytochrome b composed of a large and a small subunit. The cofactor is FAD.

The protein resides in the mitochondrion inner membrane. It carries out the reaction a ubiquinone + succinate = a ubiquinol + fumarate. The enzyme catalyses (R)-malate + a quinone = enol-oxaloacetate + a quinol. It catalyses the reaction (S)-malate + a quinone = enol-oxaloacetate + a quinol. The protein operates within carbohydrate metabolism; tricarboxylic acid cycle; fumarate from succinate (eukaryal route): step 1/1. Enol-oxaloacetate inhibits the succinate dehydrogenase activity. Its function is as follows. Flavoprotein (FP) subunit of succinate dehydrogenase (SDH) that is involved in complex II of the mitochondrial electron transport chain and is responsible for transferring electrons from succinate to ubiquinone (coenzyme Q). SDH also oxidizes malate to the non-canonical enol form of oxaloacetate, enol-oxaloacetate. Enol-oxaloacetate, which is a potent inhibitor of the succinate dehydrogenase activity, is further isomerized into keto-oxaloacetate. The polypeptide is Succinate dehydrogenase [ubiquinone] flavoprotein subunit B, mitochondrial (sdha-b) (Xenopus laevis (African clawed frog)).